Here is a 46-residue protein sequence, read N- to C-terminus: Pape peptide (46 aa).

A compositionally biased stretch (low complexity) spans 1–10 (KQLLKEALAP). Residues 1–46 (KQLLKEALAPEPAPKPAPEPAPEPAPEPAPEAAPEPAAAAPEAAPE) form a disordered region. The span at 11–33 (EPAPKPAPEPAPEPAPEPAPEAA) shows a compositional bias: pro residues. PAPE repeat units follow at residues 16–19 (PAPE), 20–23 (PAPE), 24–27 (PAPE), and 28–31 (PAPE). The segment covering 34 to 46 (PEPAAAAPEAAPE) has biased composition (low complexity).

Expressed by the venom gland.

Its subcellular location is the secreted. The chain is Pape peptide from Tityus stigmurus (Brazilian scorpion).